The following is an 843-amino-acid chain: Eisosome protein 1 (843 aa).

Residue Ser-2 is modified to N-acetylserine. A Phosphoserine modification is found at Ser-2. The disordered stretch occupies residues 13-44; sequence HNIGKTSGGGSRTSSITSSKKSLKHGSKSLRK. Positions 33-44 are enriched in basic residues; the sequence is KSLKHGSKSLRK. Phosphoserine occurs at positions 88 and 130. Residues 120 to 174 form a disordered region; the sequence is KMGPKVVRNNSITSATSKTSKESQTKRKSKESPGAAASKAYSMTMETTSLSSQTN. 2 stretches are compositionally biased toward polar residues: residues 127–137 and 163–174; these read RNNSITSATSK and TMETTSLSSQTN. Phosphoserine is present on residues Ser-182, Ser-401, Ser-584, and Ser-710. The segment at 717–843 is disordered; sequence DLPTQLEKIE…QDAISNQEKK (127 aa). Thr-720 carries the post-translational modification Phosphothreonine. The segment covering 752-764 has biased composition (low complexity); it reads STAAKEATETSSA. 2 positions are modified to phosphoserine: Ser-763 and Ser-775. Residues 781 to 797 are compositionally biased toward basic and acidic residues; it reads SGKEDANDCKSAEHSKE. Residues 798–810 are compositionally biased toward polar residues; that stretch reads ISVSQKAGNNKSL. Residues Ser-816, Ser-828, Ser-829, and Ser-838 each carry the phosphoserine modification.

Belongs to the EIS1 family.

It localises to the cytoplasmic granule. Its subcellular location is the cell membrane. Its function is as follows. Required for normal formation of eisosomes, large cytoplasmic protein assemblies that localize to specialized domains on plasma membrane and mark the site of endocytosis. The chain is Eisosome protein 1 (EIS1) from Saccharomyces cerevisiae (strain RM11-1a) (Baker's yeast).